Here is a 116-residue protein sequence, read N- to C-terminus: Spexin (116 aa).

A signal peptide spans 1 to 26 (MKGPSILAVAALALLLVLSVLENSSG). The propeptide occupies 27–35 (APQRLSEKR). The residue at position 49 (glutamine 49) is a Glutamine amide. 2 consecutive propeptides follow at residues 50 to 116 (GHRF…RFYW) and 74 to 116 (PNLQ…RFYW). A compositionally biased stretch (basic and acidic residues) spans 56–73 (DQSRRKELADRPPPERRN). The interval 56–75 (DQSRRKELADRPPPERRNPN) is disordered.

Belongs to the spexin family. As to expression, widely expressed; predominantly expressed in epithelial cells in the skin, respiratory, digestive, urinary and reproductive systems, retina, adrenal gland and various brain regions. In the adrenal gland, expressed in parenchymal cells of the cortex and in ganglionic cells and intermingled cortical cells of the medulla. Expressed in the type I glomic cells within the carotid body (at protein level). Widely expressed. Strongly expressed in esophagus, liver, pancreas, kidney, brain, hypothalamus, thyroid and ovary. Expressed in the zona glomerulosa (ZG) and zona fasciculata/reticularis (ZF/R) of the adrenal gland. Also expressed in stomach, lung, skeletal muscle, heart, uterus, spleen, adrenal gland and testis. Weakly expressed in small intestine, thymus, urinary bladder and adenohypophysis. In the brain, is expressed in the Barrington's nucleus, with lesser amount in the ventrolateral caudal periaqueductal gray (PAG) and in the mesopontine tegmentum.

Its subcellular location is the secreted. The protein localises to the extracellular space. The protein resides in the cytoplasmic vesicle. It localises to the secretory vesicle. Functionally, plays a role as a central modulator of cardiovascular and renal function and nociception. Also plays a role in energy metabolism and storage. Inhibits adrenocortical cell proliferation with minor stimulation on corticosteroid release. Its function is as follows. Acts as a ligand for galanin receptors GALR2 and GALR3. Intracerebroventricular administration of the peptide induces an increase in arterial blood pressure, a decrease in both heart rate and renal excretion and delayed natriuresis. Intraventricular administration of the peptide induces antinociceptive activity. Intraperitoneal administration of the peptide induces a reduction in food consumption and body weight. Inhibits long chain fatty acid uptake into adipocytes. Also induces contraction of muscarinic-like stomach smooth muscles. Intracerebroventricular administration of the peptide induces a decrease in heart rate, but no change in arterial pressure, and an increase in urine flow rate. Intraventricular administration of the peptide induces antinociceptive activity. This is Spexin (SPX) from Rattus norvegicus (Rat).